The following is a 306-amino-acid chain: Elongation factor Ts (306 aa).

Residues 80 to 83 (TDFV) are involved in Mg(2+) ion dislocation from EF-Tu.

It belongs to the EF-Ts family.

The protein localises to the cytoplasm. Associates with the EF-Tu.GDP complex and induces the exchange of GDP to GTP. It remains bound to the aminoacyl-tRNA.EF-Tu.GTP complex up to the GTP hydrolysis stage on the ribosome. This chain is Elongation factor Ts, found in Clostridium acetobutylicum (strain ATCC 824 / DSM 792 / JCM 1419 / IAM 19013 / LMG 5710 / NBRC 13948 / NRRL B-527 / VKM B-1787 / 2291 / W).